A 555-amino-acid chain; its full sequence is Cytochrome P450 monooxygeanse terQ (555 aa).

The helical transmembrane segment at 10-30 (VPAHAWPTITVAGAVMVVVLL) threads the bilayer. Cys479 provides a ligand contact to heme. The interval 535-555 (DAGNTARVDPGAPDGVASEPS) is disordered.

It belongs to the cytochrome P450 family. Heme is required as a cofactor.

Its subcellular location is the membrane. The protein operates within secondary metabolite biosynthesis. In terms of biological role, cytochrome P450 monooxygeanse; part of the gene cluster that mediates the biosynthesis of terpendoles, indole-diterpene (IDT) mycotoxins including terpendole I, terpendole K, terpendole C, as well as the kinesin Eg5 inhibitor terpendole E. TerQ is a C11-hydroxylating enzyme that converts paspalline into terpendole E. Is also able to hydroxylate 13-desoxyterpendole I at C-13 to produce terpendole I. Terpendoles biosynthesis begins with the synthesis of geranylgeranyl diphosphate (GGPP) by a yet unidentified GGPP synthase. Condensation of indole-3-glycerol phosphate with GGPP by the prenyltransferase terC then forms 3-geranylgeranylindole (3-GGI), followed by epoxidation and cyclization of this intermediate (by the FAD-dependent monooxygeanse terM and the terpene cyclase terB) to form paspaline. The cytochrome monooxygenase terQ then hydroxylates paspalline at C-11 to yield terpendole E. The cytochrome monooxygenase terP converts terpendole E to 13-desoxyterpendole I, and terQ converts 13-desoxyterpendole I into terpendole I. TerF and terK are required for conversion of terpendole I to terpendole C which is further converted to terpendole K. The protein is Cytochrome P450 monooxygeanse terQ of Tolypocladium album (Soil fungus).